A 611-amino-acid polypeptide reads, in one-letter code: Elongation factor 4 (611 aa).

A tr-type G domain is found at 11–193 (EKIRNFSIIA…QVVEYVPAPS (183 aa)). Residues 23 to 28 (DHGKST) and 140 to 143 (NKID) contribute to the GTP site.

Belongs to the TRAFAC class translation factor GTPase superfamily. Classic translation factor GTPase family. LepA subfamily.

Its subcellular location is the cell membrane. It carries out the reaction GTP + H2O = GDP + phosphate + H(+). In terms of biological role, required for accurate and efficient protein synthesis under certain stress conditions. May act as a fidelity factor of the translation reaction, by catalyzing a one-codon backward translocation of tRNAs on improperly translocated ribosomes. Back-translocation proceeds from a post-translocation (POST) complex to a pre-translocation (PRE) complex, thus giving elongation factor G a second chance to translocate the tRNAs correctly. Binds to ribosomes in a GTP-dependent manner. This is Elongation factor 4 from Enterococcus faecalis (strain ATCC 700802 / V583).